The primary structure comprises 779 residues: Transcription activator of gluconeogenesis BDCG_02812 (779 aa).

Residues 1–70 are disordered; sequence MTASTRNGSP…NAKDPLRPRR (70 aa). Residues 25 to 61 show a composition bias toward polar residues; that stretch reads KSMTTTPANPPETKSQTNGKGSGTAQSSQKPASTSAN. Positions 77 to 105 form a DNA-binding region, zn(2)-C6 fungal-type; that stretch reads CFACQRAHLTCGDERPCQRCIKRGLQDAC. Disordered stretches follow at residues 135-163, 202-239, 285-344, 401-421, 559-590, and 655-732; these read QANT…QSVS, SVFH…SVSG, GAGD…ANPR, TNLM…PGLK, GSSL…PHTG, and FHGK…QTWG. Residues 202–226 show a composition bias toward polar residues; it reads SVFHAQSPSSTQNFDLSSNPQTQNL. Low complexity predominate over residues 227–238; sequence SSAMSQTASSVS. Polar residues-rich tracts occupy residues 291–322, 333–344, and 401–416; these read PSDS…NQSP, WNPTGQGQANPR, and TNLM…SRIS. A compositionally biased stretch (low complexity) spans 560-572; that stretch reads SSLSSASSVRGSS. Residues 573-586 are compositionally biased toward polar residues; it reads TFTPRNNNTHNSID. Over residues 672–719 the composition is skewed to low complexity; that stretch reads TGTTTSGDVATTTATGTSTSNGANANTNGNNTNPNDPSSAASSSASSA. Over residues 720-729 the composition is skewed to polar residues; the sequence is LQGPQQSPRQ.

The protein belongs to the ERT1/acuK family.

It localises to the nucleus. Transcription factor which regulates nonfermentable carbon utilization. Activator of gluconeogenetic genes. The chain is Transcription activator of gluconeogenesis BDCG_02812 from Ajellomyces dermatitidis (strain ER-3 / ATCC MYA-2586) (Blastomyces dermatitidis).